Consider the following 274-residue polypeptide: Putative outer membrane protein CPn_1073/CP_0776/CPj1073/CpB1118 (274 aa).

The N-terminal stretch at 1-21 is a signal peptide; that stretch reads MRRYLFMVLALCLYRAAPLEA.

The protein resides in the cell outer membrane. The sequence is that of Putative outer membrane protein CPn_1073/CP_0776/CPj1073/CpB1118 from Chlamydia pneumoniae (Chlamydophila pneumoniae).